The following is a 427-amino-acid chain: UDP-N-acetylglucosamine 1-carboxyvinyltransferase 1 (427 aa).

Residue 23-24 participates in phosphoenolpyruvate binding; that stretch reads KN. Arg96 lines the UDP-N-acetyl-alpha-D-glucosamine pocket. Cys120 acts as the Proton donor in catalysis. Position 120 is a 2-(S-cysteinyl)pyruvic acid O-phosphothioketal (Cys120). UDP-N-acetyl-alpha-D-glucosamine-binding positions include 125-129, Asp309, and Val331; that span reads RPIDL.

It belongs to the EPSP synthase family. MurA subfamily.

The protein localises to the cytoplasm. The enzyme catalyses phosphoenolpyruvate + UDP-N-acetyl-alpha-D-glucosamine = UDP-N-acetyl-3-O-(1-carboxyvinyl)-alpha-D-glucosamine + phosphate. It participates in cell wall biogenesis; peptidoglycan biosynthesis. Functionally, cell wall formation. Adds enolpyruvyl to UDP-N-acetylglucosamine. This Streptococcus pneumoniae (strain ATCC BAA-255 / R6) protein is UDP-N-acetylglucosamine 1-carboxyvinyltransferase 1.